The sequence spans 142 residues: Large ribosomal subunit protein uL11 (142 aa).

Belongs to the universal ribosomal protein uL11 family. As to quaternary structure, part of the ribosomal stalk of the 50S ribosomal subunit. Interacts with L10 and the large rRNA to form the base of the stalk. L10 forms an elongated spine to which L12 dimers bind in a sequential fashion forming a multimeric L10(L12)X complex. Post-translationally, one or more lysine residues are methylated.

Functionally, forms part of the ribosomal stalk which helps the ribosome interact with GTP-bound translation factors. This chain is Large ribosomal subunit protein uL11, found in Liberibacter asiaticus (Citrus greening disease).